The sequence spans 84 residues: U21-theraphotoxin-Cg1b (84 aa).

The signal sequence occupies residues methionine 1–alanine 21. A propeptide spanning residues glutamate 22–arginine 47 is cleaved from the precursor. Cystine bridges form between cysteine 49-cysteine 63, cysteine 56-cysteine 68, and cysteine 62-cysteine 76. Phenylalanine 82 is modified (phenylalanine amide).

The protein belongs to the neurotoxin 10 (Hwtx-1) family. 05 (F4a) subfamily. Expressed by the venom gland.

The protein localises to the secreted. Functionally, probable ion channel inhibitor. In Chilobrachys guangxiensis (Chinese earth tiger tarantula), this protein is U21-theraphotoxin-Cg1b.